The primary structure comprises 348 residues: Rhodopsin (348 aa).

Position 1 is an N-acetylmethionine (M1). Residues 1–36 are Extracellular-facing; the sequence is MNGTEGLNFYVPFSNKTGVVRSPFEYPQYYLAEPWQ. N2 and N15 each carry an N-linked (GlcNAc...) asparagine glycan. The chain crosses the membrane as a helical span at residues 37–61; the sequence is FSVLAAYMFLLIVLGFPINFLTLYV. Over 62-73 the chain is Cytoplasmic; it reads TVQHKKLRTPLN. Residues 74 to 96 traverse the membrane as a helical segment; that stretch reads YIPLNLAVANLFMVFGGFTTTLY. The Extracellular portion of the chain corresponds to 97 to 110; the sequence is TSLHAYFVFGPTGC. The cysteines at positions 110 and 187 are disulfide-linked. The chain crosses the membrane as a helical span at residues 111 to 133; that stretch reads NLEGFFATLGGEIALWSLVVLAI. The short motif at 134-136 is the 'Ionic lock' involved in activated form stabilization element; sequence ERY. Topologically, residues 134–152 are cytoplasmic; sequence ERYVVVCKPMSNFRFGENH. A helical transmembrane segment spans residues 153-173; sequence AIMGLALTWVMAMACAAPPLV. The Extracellular portion of the chain corresponds to 174-202; the sequence is GWSRYIPEGMQCSCGIDYYTSRQEVNNES. E201 is a binding site for Zn(2+). A helical membrane pass occupies residues 203–224; sequence FVIYMFVVHFTIPLVIIFFCYG. At 225 to 252 the chain is on the cytoplasmic side; the sequence is QLVFTVKEAAAQQQESATTQKAEKEVTR. The helical transmembrane segment at 253–274 threads the bilayer; sequence MVIIMVVAFLICWVPYASVAFY. At 275–286 the chain is on the extracellular side; it reads IFTHQGSDFGPI. Q279 is a binding site for Zn(2+). A helical transmembrane segment spans residues 287–308; the sequence is FMTIPSFFAKSSSIYNPVIYIM. An N6-(retinylidene)lysine modification is found at K296. The Cytoplasmic portion of the chain corresponds to 309–348; the sequence is MNKQLRNCMLTTLCCGRNPLGDDEASTTASKTETSQVAPA. 2 S-palmitoyl cysteine lipidation sites follow: C322 and C323. Residues 330–348 are interaction with SAG; the sequence is DDEASTTASKTETSQVAPA. S334 is modified (phosphoserine). Residues T335 and T336 each carry the phosphothreonine modification. A Phosphoserine modification is found at S338. Residues T340 and T342 each carry the phosphothreonine modification. Phosphoserine is present on S343.

This sequence belongs to the G-protein coupled receptor 1 family. Opsin subfamily. As to quaternary structure, homodimer. May form a complex composed of RHO, GRK1 and RCVRN in a Ca(2+)-dependent manner; RCVRN prevents the interaction between GRK1 and RHO. Interacts with GRK1. Interacts (phosphorylated form) with SAG. Interacts with GNAT1. Interacts with GNAT3. SAG and G-proteins compete for a common binding site. Interacts with PRCD; the interaction promotes PRCD stability. Forms a complex with ASAP1 and ARF4. Forms a complex with ASAP1, RAB11A, Rabin8/RAB3IP, ARF4 and RAB11FIP3; the complex regulates Golgi-to-cilia rhodopsin/RHO transport in photoreceptors. Post-translationally, phosphorylated on some or all of the serine and threonine residues present in the C-terminal region. Contains one covalently linked retinal chromophore. Upon light absorption, the covalently bound 11-cis-retinal is converted to all-trans-retinal. After hydrolysis of the Schiff base and release of the covalently bound all-trans-retinal, active rhodopsin is regenerated by binding of a fresh molecule of 11-cis-retinal.

The protein resides in the membrane. Its subcellular location is the cell projection. It is found in the cilium. It localises to the photoreceptor outer segment. Photoreceptor required for image-forming vision at low light intensity. Required for photoreceptor cell viability after birth. Light-induced isomerization of 11-cis to all-trans retinal triggers a conformational change that activates signaling via G-proteins. Subsequent receptor phosphorylation mediates displacement of the bound G-protein alpha subunit by the arrestin SAG and terminates signaling. In Globicephala melas (Long-finned pilot whale), this protein is Rhodopsin (RHO).